Here is a 233-residue protein sequence, read N- to C-terminus: CDP-diacylglycerol--glycerol-3-phosphate 3-phosphatidyltransferase 2 (233 aa).

The interval 1–23 is disordered; it reads MGEEDTATVDQNSFGGGKDSLLR. Transmembrane regions (helical) follow at residues 40-60, 71-91, 100-120, 125-145, and 201-221; these read VITL…ILVA, TATT…GYIA, FGAF…LILL, MVAV…IAII, and LPSG…SLVV.

Belongs to the CDP-alcohol phosphatidyltransferase class-I family. Requires Mn(2+) as cofactor.

It is found in the microsome membrane. It localises to the endoplasmic reticulum membrane. The catalysed reaction is a CDP-1,2-diacyl-sn-glycerol + sn-glycerol 3-phosphate = a 1,2-diacyl-sn-glycero-3-phospho-(1'-sn-glycero-3'-phosphate) + CMP + H(+). Its pathway is phospholipid metabolism; phosphatidylglycerol biosynthesis; phosphatidylglycerol from CDP-diacylglycerol: step 1/2. Its function is as follows. Catalyzes the committed step to the synthesis of the acidic phospholipids, including phosphatidylglycerol (PG). Together with PGPS1, required for the proper embryo development by providing PG accurate levels. This chain is CDP-diacylglycerol--glycerol-3-phosphate 3-phosphatidyltransferase 2, found in Arabidopsis thaliana (Mouse-ear cress).